The primary structure comprises 1145 residues: Cellulose synthase-like protein D3 (1145 aa).

Over residues 1-19 the composition is skewed to polar residues; the sequence is MASNNHFMNSRSNLSTNSD. Disordered stretches follow at residues 1–38 and 189–208; these read MASN…TFAR and DNNK…SKMD. Helical transmembrane passes span 289–309 and 319–339; these read VISP…LFLM and AIWL…SWLL. The active site involves Asp-419. Ser-755 is subject to Phosphoserine. The active site involves Asp-848. The next 6 membrane-spanning stretches (helical) occupy residues 930-950, 956-976, 1002-1022, 1045-1065, 1079-1099, and 1109-1129; these read FFLI…QFIV, TFLV…LLEI, LAAV…SFTL, SLMI…AVGF, LIGG…FAKG, and TIVY…WVAI.

It belongs to the glycosyltransferase 2 family. Plant cellulose synthase-like D subfamily. Preferentially expressed in root hair cells. Expressed in roots, leaves, stems, flowers and siliques.

It localises to the golgi apparatus membrane. Thought to be a Golgi-localized beta-glycan synthase that polymerize the backbones of noncellulosic polysaccharides (hemicelluloses) of plant cell wall. Required for synthesis of a cell wall polysaccharide essential for root hair elongation, but not initiation. May be the functional ortholog of rice CSLD1. The protein is Cellulose synthase-like protein D3 (CSLD3) of Arabidopsis thaliana (Mouse-ear cress).